A 36-amino-acid polypeptide reads, in one-letter code: Pollen allergen Dac g 2 (36 aa).

This sequence belongs to the expansin family. Expansin B subfamily.

It is found in the secreted. The protein is Pollen allergen Dac g 2 of Dactylis glomerata (Orchard grass).